The primary structure comprises 186 residues: UPF0157 protein SCO7215 (186 aa).

This sequence belongs to the UPF0157 (GrpB) family.

This chain is UPF0157 protein SCO7215, found in Streptomyces coelicolor (strain ATCC BAA-471 / A3(2) / M145).